The sequence spans 205 residues: MANLEIIDQKGKSAGNVDLNEEIFGIEPNESVVFDAIIRQRAGKRQGTSAVKNRSAVRGGGKKPWRQKGTGRARQGSIRAPQWRGGGTVFGPTPRSYKMDMPRKARRLAMKSVLSQKVADKDLIILDQLTLEAPKTKELKAILDNANVSGKVLVVSDDKNVQLSGKNLPKVKVVPVNGLNVVDAVDYQKLVLTQDAIKRIEEVLA.

The segment at Arg45–Tyr97 is disordered. Residues Gly60–Gly71 show a composition bias toward basic residues.

Belongs to the universal ribosomal protein uL4 family. As to quaternary structure, part of the 50S ribosomal subunit.

In terms of biological role, one of the primary rRNA binding proteins, this protein initially binds near the 5'-end of the 23S rRNA. It is important during the early stages of 50S assembly. It makes multiple contacts with different domains of the 23S rRNA in the assembled 50S subunit and ribosome. Functionally, forms part of the polypeptide exit tunnel. The protein is Large ribosomal subunit protein uL4 of Lactobacillus gasseri (strain ATCC 33323 / DSM 20243 / BCRC 14619 / CIP 102991 / JCM 1131 / KCTC 3163 / NCIMB 11718 / NCTC 13722 / AM63).